We begin with the raw amino-acid sequence, 51 residues long: uncharacterized protein (51 aa).

The stretch at 3 to 30 forms a coiled coil; it reads EEKAVSLAKEIIELDIKRDEMLETFMQL.

This is an uncharacterized protein from Bacillus subtilis (strain 168).